The chain runs to 320 residues: tRNA N6-adenosine threonylcarbamoyltransferase (320 aa).

His-114 and His-118 together coordinate Fe cation. Substrate is bound by residues Val-136–Gly-140, Asp-169, Gly-182, Asp-186, and Asn-273. Position 297 (Asp-297) interacts with Fe cation.

Belongs to the KAE1 / TsaD family. Fe(2+) serves as cofactor.

The protein localises to the cytoplasm. It carries out the reaction L-threonylcarbamoyladenylate + adenosine(37) in tRNA = N(6)-L-threonylcarbamoyladenosine(37) in tRNA + AMP + H(+). Functionally, required for the formation of a threonylcarbamoyl group on adenosine at position 37 (t(6)A37) in tRNAs that read codons beginning with adenine. Is involved in the transfer of the threonylcarbamoyl moiety of threonylcarbamoyl-AMP (TC-AMP) to the N6 group of A37, together with TsaE and TsaB. TsaD likely plays a direct catalytic role in this reaction. The polypeptide is tRNA N6-adenosine threonylcarbamoyltransferase (Ureaplasma parvum serovar 3 (strain ATCC 27815 / 27 / NCTC 11736)).